The sequence spans 357 residues: Histidinol-phosphate aminotransferase (357 aa).

An N6-(pyridoxal phosphate)lysine modification is found at K218.

The protein belongs to the class-II pyridoxal-phosphate-dependent aminotransferase family. Histidinol-phosphate aminotransferase subfamily. As to quaternary structure, homodimer. Requires pyridoxal 5'-phosphate as cofactor.

The catalysed reaction is L-histidinol phosphate + 2-oxoglutarate = 3-(imidazol-4-yl)-2-oxopropyl phosphate + L-glutamate. It functions in the pathway amino-acid biosynthesis; L-histidine biosynthesis; L-histidine from 5-phospho-alpha-D-ribose 1-diphosphate: step 7/9. In Chlorobium luteolum (strain DSM 273 / BCRC 81028 / 2530) (Pelodictyon luteolum), this protein is Histidinol-phosphate aminotransferase.